The sequence spans 102 residues: Putative sortase YwpE (102 aa).

The active-site Proton donor/acceptor is His17. The Acyl-thioester intermediate role is filled by Cys78.

Belongs to the bacterial sortase family.

Seems not to play a major role if any as a sortase. The polypeptide is Putative sortase YwpE (ywpE) (Bacillus subtilis (strain 168)).